The primary structure comprises 73 residues: MAINREILAKSDIKVEVELKRSLIGKLDSKVKTLKALGLKRIGDRKIHVLNKSLQGMLNSVISMVLLSEVKNG.

Belongs to the universal ribosomal protein uL30 family. In terms of assembly, part of the 50S ribosomal subunit.

The protein is Large ribosomal subunit protein uL30 of Borrelia hermsii (strain HS1 / DAH).